The primary structure comprises 150 residues: Large ribosomal subunit protein bL9 (150 aa).

This sequence belongs to the bacterial ribosomal protein bL9 family.

Functionally, binds to the 23S rRNA. In Hamiltonella defensa subsp. Acyrthosiphon pisum (strain 5AT), this protein is Large ribosomal subunit protein bL9.